We begin with the raw amino-acid sequence, 235 residues long: MAGYKRILLKLSGEALAGAATFGIDADRVRSLGREVADVAASGIQVGVVVGGGNIFRGVAAAARSMDRVTGDHMGMLATVINSLALSDALEQMGIPTRVMSAIEMHQVAEPYIRRRAIRHLEKGRIVIFAAGTSNPYFSTDTAATLRALEIKADVIAKATRVDGVYDKDPLKHPDAVKFPEISYLEVLSRGLGVMDATSIAMCRDNKLPIIVFNLNTIGNIMRMSMGETIGTVIH.

Residue 10–13 (KLSG) coordinates ATP. Glycine 52 serves as a coordination point for UMP. The ATP site is built by glycine 53 and arginine 57. UMP contacts are provided by residues aspartate 72 and 133 to 140 (TSNPYFST). Residues threonine 160, tyrosine 166, and aspartate 169 each coordinate ATP.

Belongs to the UMP kinase family. Homohexamer.

The protein resides in the cytoplasm. The enzyme catalyses UMP + ATP = UDP + ADP. It participates in pyrimidine metabolism; CTP biosynthesis via de novo pathway; UDP from UMP (UMPK route): step 1/1. Its activity is regulated as follows. Inhibited by UTP. Functionally, catalyzes the reversible phosphorylation of UMP to UDP. This Solibacter usitatus (strain Ellin6076) protein is Uridylate kinase.